Consider the following 287-residue polypeptide: MAIVFPFQLEKKLISITSDRDQISMSIPEVSSHDSCLNDCHSVNSEEQAKPVCCLELNAHKDGIKVVDTSNDASTFSNSPLVPDNFGVVYPGIIYRSACPRASNFNFLESLHIRTIISLRQEEYSEEDLHYFTKHHINYYHIAMPGSKHRKNDCISSSSNPDISDVDDLVRKTLQLLLNKENWPVLLHCSRGKHRTGIVIGCLRALMNWPVGNRLQEYISFSHPKEREVDEEYIQNFSSDPSLKSSLNDLKRYISDSSSELADVVLSSESPTVQAATVNETCRSPGS.

One can recognise a Tyrosine-protein phosphatase domain in the interval 85–256 (NFGVVYPGII…LNDLKRYISD (172 aa)). 2 positions are modified to phosphoserine: Ser-156 and Ser-159. Cys-189 (phosphocysteine intermediate) is an active-site residue.

Belongs to the protein-tyrosine phosphatase family. Atypical dual-specificity phosphatase Siw14-like subfamily.

The protein localises to the cytoplasm. Its subcellular location is the nucleus. The catalysed reaction is 5-diphospho-1D-myo-inositol 1,2,3,4,6-pentakisphosphate + H2O = 1D-myo-inositol hexakisphosphate + phosphate + H(+). The enzyme catalyses 1-diphospho-1D-myo-inositol 2,3,4,5,6-pentakisphosphate + H2O = 1D-myo-inositol hexakisphosphate + phosphate + H(+). It catalyses the reaction 1,5-bis(diphospho)-1D-myo-inositol 2,3,4,6-tetrakisphosphate + H2O = 1-diphospho-1D-myo-inositol 2,3,4,5,6-pentakisphosphate + phosphate + 2 H(+). With respect to regulation, activity is inhibited by the reaction product inorganic phosphate and by sulfate (a phosphate mimetic). Not inhibited by magnesium. Its function is as follows. Cleaves the beta-phosphate at the 1- and 5-position of soluble inositol pyrophosphates. Has exopolyphosphatase activity in vitro but does not appear to contribute to the homeostasis of cellular polyphosphate. The chain is Inositol diphosphatase siw14 from Schizosaccharomyces pombe (strain 972 / ATCC 24843) (Fission yeast).